The primary structure comprises 100 residues: Large ribosomal subunit protein uL23 (100 aa).

Belongs to the universal ribosomal protein uL23 family. As to quaternary structure, part of the 50S ribosomal subunit. Contacts protein L29, and trigger factor when it is bound to the ribosome.

Its function is as follows. One of the early assembly proteins it binds 23S rRNA. One of the proteins that surrounds the polypeptide exit tunnel on the outside of the ribosome. Forms the main docking site for trigger factor binding to the ribosome. This Baumannia cicadellinicola subsp. Homalodisca coagulata protein is Large ribosomal subunit protein uL23.